A 472-amino-acid polypeptide reads, in one-letter code: DNA-cytosine methyltransferase (472 aa).

One can recognise an SAM-dependent MTase C5-type domain in the interval Phe87–Ala457. Cys177 is an active-site residue.

This sequence belongs to the class I-like SAM-binding methyltransferase superfamily. C5-methyltransferase family.

It catalyses the reaction a 2'-deoxycytidine in DNA + S-adenosyl-L-methionine = a 5-methyl-2'-deoxycytidine in DNA + S-adenosyl-L-homocysteine + H(+). This methylase recognizes the double-stranded sequence 5'-CCWGG-3', methylates C-2 on both strands. The protein is DNA-cytosine methyltransferase (dcm) of Escherichia coli O157:H7.